Reading from the N-terminus, the 445-residue chain is Tubulin beta-3 chain (445 aa).

Residues Q11, E69, S138, G142, T143, G144, N204, and N226 each contribute to the GTP site. E69 is a binding site for Mg(2+). The span at 417 to 426 (DLVSEYQQYQ) shows a compositional bias: polar residues. Residues 417–445 (DLVSEYQQYQEASADDEADEFDEEEGDEE) form a disordered region. The span at 429-445 (SADDEADEFDEEEGDEE) shows a compositional bias: acidic residues.

This sequence belongs to the tubulin family. As to quaternary structure, dimer of alpha and beta chains. A typical microtubule is a hollow water-filled tube with an outer diameter of 25 nm and an inner diameter of 15 nM. Alpha-beta heterodimers associate head-to-tail to form protofilaments running lengthwise along the microtubule wall with the beta-tubulin subunit facing the microtubule plus end conferring a structural polarity. Microtubules usually have 13 protofilaments but different protofilament numbers can be found in some organisms and specialized cells. Requires Mg(2+) as cofactor.

It localises to the cytoplasm. Its subcellular location is the cytoskeleton. Its function is as follows. Tubulin is the major constituent of microtubules, a cylinder consisting of laterally associated linear protofilaments composed of alpha- and beta-tubulin heterodimers. Microtubules grow by the addition of GTP-tubulin dimers to the microtubule end, where a stabilizing cap forms. Below the cap, tubulin dimers are in GDP-bound state, owing to GTPase activity of alpha-tubulin. This is Tubulin beta-3 chain (TUBB3) from Oomycete-like sp. (strain MacKay2000).